Consider the following 224-residue polypeptide: Germin-like protein 8-4 (224 aa).

The signal sequence occupies residues 1 to 23 (MASSSSLYLLAALLALASWQAIA). Cys33 and Cys48 are disulfide-bonded. The region spanning 70–213 (STMNKVGSNV…AFQVEKKVID (144 aa)) is the Cupin type-1 domain. Asn78 carries an N-linked (GlcNAc...) asparagine glycan. 4 residues coordinate Mn(2+): His111, His113, Glu118, and His158.

The protein belongs to the germin family. As to quaternary structure, oligomer (believed to be a pentamer but probably hexamer).

It localises to the secreted. The protein resides in the extracellular space. The protein localises to the apoplast. In terms of biological role, plays a role in broad-spectrum disease resistance. Probably has no oxalate oxidase activity even if the active site is conserved. The polypeptide is Germin-like protein 8-4 (GER1) (Oryza sativa subsp. japonica (Rice)).